The primary structure comprises 339 residues: Anthranilate phosphoribosyltransferase (339 aa).

5-phospho-alpha-D-ribose 1-diphosphate contacts are provided by residues glycine 79, glycine 82–aspartate 83, threonine 87, asparagine 89–threonine 92, lysine 107–serine 115, and serine 119. Glycine 79 contributes to the anthranilate binding site. Mg(2+) is bound at residue serine 91. Asparagine 110 contributes to the anthranilate binding site. Arginine 165 is a binding site for anthranilate. The Mg(2+) site is built by aspartate 224 and glutamate 225.

Belongs to the anthranilate phosphoribosyltransferase family. As to quaternary structure, homodimer. The cofactor is Mg(2+).

It carries out the reaction N-(5-phospho-beta-D-ribosyl)anthranilate + diphosphate = 5-phospho-alpha-D-ribose 1-diphosphate + anthranilate. It functions in the pathway amino-acid biosynthesis; L-tryptophan biosynthesis; L-tryptophan from chorismate: step 2/5. Functionally, catalyzes the transfer of the phosphoribosyl group of 5-phosphorylribose-1-pyrophosphate (PRPP) to anthranilate to yield N-(5'-phosphoribosyl)-anthranilate (PRA). The protein is Anthranilate phosphoribosyltransferase of Geobacillus stearothermophilus (Bacillus stearothermophilus).